The following is a 290-amino-acid chain: Lysine export transcriptional regulatory protein LysG (290 aa).

An HTH lysR-type domain is found at 1-57; the sequence is MNPIHLDTLLTIIDEGSFENASLALSISPSAVSQRIKALEKSVGRVLVSRTQPAVAT. Residues 18–37 constitute a DNA-binding region (H-T-H motif); it reads FENASLALSISPSAVSQRIK.

Belongs to the LysR transcriptional regulatory family.

In terms of biological role, positively regulates the expression of the exporter LysE. This is Lysine export transcriptional regulatory protein LysG (lysG) from Corynebacterium efficiens (strain DSM 44549 / YS-314 / AJ 12310 / JCM 11189 / NBRC 100395).